A 651-amino-acid chain; its full sequence is UvrABC system protein B (651 aa).

Residues 25-411 form the Helicase ATP-binding domain; it reads RGISCGAKEQ…TGGVATEQLI (387 aa). 38-45 provides a ligand contact to ATP; the sequence is GVTGSGKT. The Beta-hairpin motif lies at 91–114; it reads YYDYYQPEAYIPQSDVYIEKDALI. The region spanning 427–591 is the Helicase C-terminal domain; that stretch reads DGQIHDVMCE…IVPRTIQKPV (165 aa). The tract at residues 593 to 615 is disordered; sequence TSLSERVGSSRKKVSRDTNTDPA. The region spanning 616–651 is the UVR domain; the sequence is NRDIVELQKEMLLCAENLDFERAVEIRNEIKRLTAP.

It belongs to the UvrB family. Forms a heterotetramer with UvrA during the search for lesions. Interacts with UvrC in an incision complex.

Its subcellular location is the cytoplasm. Its function is as follows. The UvrABC repair system catalyzes the recognition and processing of DNA lesions. A damage recognition complex composed of 2 UvrA and 2 UvrB subunits scans DNA for abnormalities. Upon binding of the UvrA(2)B(2) complex to a putative damaged site, the DNA wraps around one UvrB monomer. DNA wrap is dependent on ATP binding by UvrB and probably causes local melting of the DNA helix, facilitating insertion of UvrB beta-hairpin between the DNA strands. Then UvrB probes one DNA strand for the presence of a lesion. If a lesion is found the UvrA subunits dissociate and the UvrB-DNA preincision complex is formed. This complex is subsequently bound by UvrC and the second UvrB is released. If no lesion is found, the DNA wraps around the other UvrB subunit that will check the other stand for damage. The polypeptide is UvrABC system protein B (Anaplasma marginale (strain St. Maries)).